We begin with the raw amino-acid sequence, 60 residues long: MDPCECTKSGTCNCGGSCTCTNCSCTSCKKSCCPCCPSGCTKCASGCVCKGKTCDTSCCQ.

The segment at M1–C28 is beta. C4, C6, C12, C14, C18, C20, C23, C25, C28, C32, C33, C35, C36, C40, C43, C47, C49, C54, C58, and C59 together coordinate a divalent metal cation. Positions K29 to Q60 are alpha.

It belongs to the metallothionein superfamily. Type 1 family.

Metallothioneins have a high content of cysteine residues that bind various heavy metals. This is Metallothionein B (mtb) from Chaenocephalus aceratus (Blackfin icefish).